The following is a 65-amino-acid chain: Alpha-toxin BeM10 (65 aa).

The LCN-type CS-alpha/beta domain occupies 2 to 65 (RDGYIADDKD…IKQKVSGKCN (64 aa)). Disulfide bonds link Cys-12/Cys-64, Cys-16/Cys-35, Cys-22/Cys-45, and Cys-26/Cys-47.

This sequence belongs to the long (4 C-C) scorpion toxin superfamily. Sodium channel inhibitor family. Alpha subfamily. In terms of tissue distribution, expressed by the venom gland.

The protein resides in the secreted. Functionally, alpha toxins bind voltage-independently at site-3 of sodium channels (Nav) and inhibit the inactivation of the activated channels, thereby blocking neuronal transmission. Has paralytic activity in mice. This chain is Alpha-toxin BeM10, found in Mesobuthus eupeus (Lesser Asian scorpion).